We begin with the raw amino-acid sequence, 340 residues long: DNA-directed RNA polymerase subunit alpha (340 aa).

An alpha N-terminal domain (alpha-NTD) region spans residues 1 to 236; that stretch reads MLSLSKNWNT…EQLQLFISFE (236 aa). The tract at residues 251–340 is alpha C-terminal domain (alpha-CTD); the sequence is FSPYLLKRVD…LSKRYEDSYN (90 aa).

It belongs to the RNA polymerase alpha chain family. As to quaternary structure, homodimer. The RNAP catalytic core consists of 2 alpha, 1 beta, 1 beta' and 1 omega subunit. When a sigma factor is associated with the core the holoenzyme is formed, which can initiate transcription.

It carries out the reaction RNA(n) + a ribonucleoside 5'-triphosphate = RNA(n+1) + diphosphate. Its function is as follows. DNA-dependent RNA polymerase catalyzes the transcription of DNA into RNA using the four ribonucleoside triphosphates as substrates. The polypeptide is DNA-directed RNA polymerase subunit alpha (Rickettsia conorii (strain ATCC VR-613 / Malish 7)).